The following is a 465-amino-acid chain: Zinc finger CCCH domain-containing protein 58 (465 aa).

A disordered region spans residues 1–26 (MERYGGAGEDESRSDPSHEWSAQGTE). C3H1-type zinc fingers lie at residues 51-79 (RPDE…HPRN), 97-125 (RMGQ…HPRQ), and 145-173 (RPGE…HPVP). Disordered regions lie at residues 173–200 (PPGV…LQSQ) and 274–302 (LSPS…QRPE). The segment covering 177 to 191 (QAPSQQQQQQLSAGP) has biased composition (low complexity). The span at 283–298 (SGPSSTGVSNKEQTFP) shows a compositional bias: polar residues. C3H1-type zinc fingers lie at residues 300–328 (RPEQ…HPME) and 345–373 (RPGA…HSLG). Low complexity predominate over residues 397–431 (SLGTLAPSSSSDQCTELISSSSIEPITTTTGGSET). The tract at residues 397–465 (SLGTLAPSSS…SASNEAKTSS (69 aa)) is disordered. Residues 444 to 453 (SHPEPAETNK) show a composition bias toward basic and acidic residues. A compositionally biased stretch (polar residues) spans 454–465 (GDSASNEAKTSS).

It localises to the nucleus. This is Zinc finger CCCH domain-containing protein 58 from Arabidopsis thaliana (Mouse-ear cress).